We begin with the raw amino-acid sequence, 331 residues long: CRISPR-associated endonuclease Cas1 (331 aa).

Positions 166, 228, and 243 each coordinate Mn(2+).

It belongs to the CRISPR-associated endonuclease Cas1 family. As to quaternary structure, homodimer, forms a heterotetramer with a Cas2 homodimer. The cofactor is Mg(2+). Mn(2+) is required as a cofactor.

Functionally, CRISPR (clustered regularly interspaced short palindromic repeat), is an adaptive immune system that provides protection against mobile genetic elements (viruses, transposable elements and conjugative plasmids). CRISPR clusters contain spacers, sequences complementary to antecedent mobile elements, and target invading nucleic acids. CRISPR clusters are transcribed and processed into CRISPR RNA (crRNA). Acts as a dsDNA endonuclease. Involved in the integration of spacer DNA into the CRISPR cassette. The protein is CRISPR-associated endonuclease Cas1 of Hyperthermus butylicus (strain DSM 5456 / JCM 9403 / PLM1-5).